The chain runs to 414 residues: Enolase (414 aa).

Position 162 (glutamine 162) interacts with (2R)-2-phosphoglycerate. Catalysis depends on glutamate 204, which acts as the Proton donor. Mg(2+) contacts are provided by aspartate 239, glutamate 280, and aspartate 307. (2R)-2-phosphoglycerate contacts are provided by lysine 332, arginine 361, serine 362, and lysine 383. The Proton acceptor role is filled by lysine 332.

The protein belongs to the enolase family. Mg(2+) serves as cofactor.

The protein resides in the cytoplasm. It localises to the secreted. Its subcellular location is the cell surface. The catalysed reaction is (2R)-2-phosphoglycerate = phosphoenolpyruvate + H2O. Its pathway is carbohydrate degradation; glycolysis; pyruvate from D-glyceraldehyde 3-phosphate: step 4/5. Its function is as follows. Catalyzes the reversible conversion of 2-phosphoglycerate (2-PG) into phosphoenolpyruvate (PEP). It is essential for the degradation of carbohydrates via glycolysis. This chain is Enolase, found in Campylobacter jejuni subsp. jejuni serotype O:6 (strain 81116 / NCTC 11828).